Reading from the N-terminus, the 474-residue chain is TOM1-like protein 1 (474 aa).

In terms of domain architecture, VHS spans 22–154 (ATFAGVLTED…DLLKKGVQFP (133 aa)). The interval 153 to 180 (FPPSDGEPETRQEAGQISPNRPTSVPTA) is disordered. A compositionally biased stretch (polar residues) spans 165 to 178 (EAGQISPNRPTSVP). S170 bears the Phosphoserine mark. The region spanning 199-287 (EQIGKLHSEL…AVLGYERFTR (89 aa)) is the GAT domain. Residues 291 to 317 (RLLEQKRNRTEATRTSSEPSAPSCDLL) are disordered. Basic and acidic residues predominate over residues 293 to 302 (LEQKRNRTEA). Phosphoserine occurs at positions 313 and 320. Positions 392 to 395 (YDNF) are interaction with GRB2. The short motif at 420–424 (LPPLP) is the SH3-binding element. Positions 441-444 (YEVM) are interaction with PIK3R1. Position 457 is a phosphotyrosine (Y457). The SH2-binding motif lies at 457 to 460 (YEEI).

It belongs to the TOM1 family. In terms of assembly, interacts with LYN. Interacts with the SH2 and SH3 domains of FYN when phosphorylated. Also interacts with GRB2 and PIK3R1 when phosphorylated. In terms of processing, phosphorylated on tyrosines by LYN. Phosphorylated on tyrosines by FYN. Strongly expressed in brain and kidney, expressed at intermediate levels skin and heart, and weakly expressed in thymus. Not expressed in liver and spleen.

The protein resides in the golgi apparatus. Its subcellular location is the golgi stack. It is found in the endosome membrane. It localises to the cytoplasm. The protein localises to the membrane. Its function is as follows. Probable adapter protein involved in signaling pathways. Interacts with the SH2 and SH3 domains of various signaling proteins when it is phosphorylated. May promote FYN activation, possibly by disrupting intramolecular SH3-dependent interactions. This is TOM1-like protein 1 (Tom1l1) from Mus musculus (Mouse).